The sequence spans 289 residues: MRHPDLPSSLTVPAAWQATLRLRFAQRGERTALTERRHQGPLLVQKPLYPEGGICHAVILHPPAGVAGGDSLDIDVTVEDGAHAVLATPGATKWYKSLGREAAQHVRLTVGAGARLDWLPQENIVFDDARARISTVLDVAPGGSAIGWDAVVLGRQASGEQWTRGALWLDTRVGTGERALWIEQSHLEAESPLRTAVAGLDGLNVLGTLWAVGEGATQELAEALAEQLPYTPELRAGVTCLATSGQSMLLLRVLGRQMEAVRHVMVDSWQALRMPIHGVAARPLRLWAT.

Belongs to the UreD family. UreD, UreF and UreG form a complex that acts as a GTP-hydrolysis-dependent molecular chaperone, activating the urease apoprotein by helping to assemble the nickel containing metallocenter of UreC. The UreE protein probably delivers the nickel.

Its subcellular location is the cytoplasm. Its function is as follows. Required for maturation of urease via the functional incorporation of the urease nickel metallocenter. This Cupriavidus necator (strain ATCC 17699 / DSM 428 / KCTC 22496 / NCIMB 10442 / H16 / Stanier 337) (Ralstonia eutropha) protein is Urease accessory protein UreD.